We begin with the raw amino-acid sequence, 48 residues long: uncharacterized protein (48 aa).

Belongs to the ELIP/psbS family.

The protein localises to the plastid. It is found in the chloroplast. Possible role in chlorophyll and/or carotenoid binding. This is an uncharacterized protein from Porphyra purpurea (Red seaweed).